Reading from the N-terminus, the 734-residue chain is E3 ubiquitin-protein ligase TRIM56 (734 aa).

The RING-type zinc-finger motif lies at 21–60 (CKICLEQLHTPKTLPCLHTYCQDCLAQLDIGGQVRCPECR). 2 B box-type zinc fingers span residues 98-149 (KPTC…VVDL) and 164-205 (RQAS…CLPL). Zn(2+) contacts are provided by Cys-169, His-172, Cys-192, and His-197. Residues 215–303 (GLEELLAGVD…KIERQEQVAK (89 aa)) are a coiled coil. Residues 372 to 381 (EPKQSPKDSG) are compositionally biased toward basic and acidic residues. Residues 372 to 463 (EPKQSPKDSG…SPILRPNLEG (92 aa)) form a disordered region. The segment covering 435-448 (RPNKKKKCKGRGKS) has biased composition (basic residues). Ser-454 carries the post-translational modification Phosphoserine.

Belongs to the TRIM/RBCC family. As to quaternary structure, interacts with STING1. Interacts with TICAM1.

It localises to the cytoplasm. It carries out the reaction S-ubiquitinyl-[E2 ubiquitin-conjugating enzyme]-L-cysteine + [acceptor protein]-L-lysine = [E2 ubiquitin-conjugating enzyme]-L-cysteine + N(6)-ubiquitinyl-[acceptor protein]-L-lysine.. It participates in protein modification; protein ubiquitination. Its function is as follows. E3 ubiquitin-protein ligase that plays a key role in innate antiviral immunity by mediating ubiquitination of CGAS and STING1. In response to pathogen- and host-derived double-stranded DNA (dsDNA), targets STING1 to 'Lys-63'-linked ubiquitination, thereby promoting its homodimerization, a step required for the production of type I interferon IFN-beta. Also mediates monoubiquitination of CGAS, thereby promoting CGAS oligomerization and subsequent activation. Independently of its E3 ubiquitin ligase activity, positive regulator of TLR3 signaling. Potentiates extracellular double stranded RNA (dsRNA)-induced expression of IFNB1 and interferon-stimulated genes ISG15, IFIT1/ISG56, CXCL10, OASL and CCL5/RANTES. This is E3 ubiquitin-protein ligase TRIM56 from Mus musculus (Mouse).